Here is a 178-residue protein sequence, read N- to C-terminus: CASP-like protein 4D1 (178 aa).

Residues 1–14 (MAPPPPSPPSVTLR) are Cytoplasmic-facing. Residues 15-35 (TVLLLLRVLTAAFLVITVVLI) traverse the membrane as a helical segment. At 36–60 (STNTVTLEVSSTSIKMRFNDVYAYR) the chain is on the extracellular side. A helical transmembrane segment spans residues 61–81 (YMLSAAVIGLLYAVVQLFLTI). The Cytoplasmic portion of the chain corresponds to 82–149 (SQFATGTTHP…KFFSKGYASA (68 aa)). A helical membrane pass occupies residues 150 to 170 (SLLLFAFVSLAVLSVFSSLAL). The Extracellular segment spans residues 171–178 (SKRPIQVS).

It belongs to the Casparian strip membrane proteins (CASP) family. In terms of assembly, homodimer and heterodimers.

It localises to the cell membrane. The protein is CASP-like protein 4D1 of Arabidopsis lyrata subsp. lyrata (Lyre-leaved rock-cress).